The following is a 509-amino-acid chain: Apurinic-apyrimidinic endonuclease 1 (509 aa).

An N-terminal signal peptide occupies residues 1 to 24 (MPRHCCCFVFHFLLYMLLINIVKN). The tract at residues 144–188 (EEKDEECDEKTKQDNNKENIKNETIVQKKKIDKNNKTKEKIKTKS) is disordered. Composition is skewed to basic and acidic residues over residues 152-164 (EKTKQDNNKENIK) and 175-188 (DKNNKTKEKIKTKS). Residues histidine 291, histidine 331, glutamate 367, aspartate 401, histidine 404, histidine 438, aspartate 451, histidine 453, and glutamate 483 each contribute to the Zn(2+) site. Residue histidine 404 participates in Mn(2+) binding. 2 residues coordinate Mn(2+): aspartate 451 and histidine 453.

The protein belongs to the AP endonuclease 2 family. It depends on Zn(2+) as a cofactor. The cofactor is Mn(2+). Post-translationally, may be proteolytically cleaved.

Its subcellular location is the mitochondrion. Its function is as follows. Plays a role in mitochondrial DNA base excision repair (BER) pathway induced by oxidative stress. Has apurinic/apyrimidinic (AP) endonuclease activity towards double-stranded DNA (dsDNA) with a preference for C as opposite base. Has 3'-phosphatase activity; removes 3'-phosphate from blunt-end, recessed, and gapped DNA templates and thus, removes 3'-blocks for DNA polymerase activity during BER. Lacks 3'-5' exonuclease activity and does not cleave damaged bases by nucleotide incision repair (NIR). This is Apurinic-apyrimidinic endonuclease 1 from Plasmodium berghei (strain Anka).